The sequence spans 352 residues: Tubby-like F-box protein 10 (352 aa).

The segment covering 1 to 11 (MAAVREPREEA) has biased composition (basic and acidic residues). The segment at 1 to 23 (MAAVREPREEAAVGEGEGEEEGR) is disordered. One can recognise an F-box domain in the interval 22-78 (GRWGGLLPELVEEVVRRVEASGGERWPARKDLVSCACVCRRWREAAAAVVRPLPESG).

This sequence belongs to the TUB family. In terms of tissue distribution, ubiquitous.

The polypeptide is Tubby-like F-box protein 10 (TULP10) (Oryza sativa subsp. japonica (Rice)).